A 905-amino-acid polypeptide reads, in one-letter code: MSEFRIHHDVNELLSLLRIHGGDGAEVYIDLLQKNRTPYVTTTVSAHSAKVKIAEFSRTPEDFLKKYDELKSKNTRNLDPLVYLLSKLTEDKETLQFLQQNAKERAELAASAATSNTTSFSIPVAASKMSTQELEELRKQLGSVSTGSTLQQSLELTRKMLRDKQNKKNSGQPLPVFPAWVYERPTLAGDFLIGSGLSSDTVLPIGTLPLASQESAVVEDLLYVLVGVDGRYITAQPLAGRQNRTFLVDPNLDLSIRELVNRILPVAASYSTVTRFIEEKSSFEYGQVNHALAAAMRTLVKEYLILVTQLEQLHRQGLLSLQKLWFYIQPAMRTIDILASLATSVDKGECVGGSTLSLLHDRSFNYTGDSQAQELCLYLTKAASAPYFEILEKWIYRGIIHDPYSEFMVEEHELRKEKIQEDYNDKYWDQRYTVLPQQIPSFLQKVAGKILSTGKYLNVVRECGHDVTCPVAKEIIYTLKERAYVEQIEKAFNYASKVLLDFLMEEKELVAHLRSIKRYFLMDQGDFFVHFMDLTEEELRKPVEDIILTRLEALLELALRMSTANTDPFKDDLKIELMPHDLITQLLRVLAIETKQEKAMTHADPTELTLSGLEAFSFDYMVKWPLSLIINRKALTRYQMLFRHMFYCKHVERQLCSVWISNKTAKQHALHSAKWFAGAFTLRQRMLNFVQNIQYYMMFEVMEPTWHILEKNLKSASNIDDVLGHHTSFLDNCLKDCMLTNPELLKVFSKLMSVCVMFTNCMQKFTQSMKLDSELGRLTLDQGSVQGPPTETERIEDRPRKELTRKHLSEHVDAPQLASGFEATINNFDKNFSAHLLDLLARLSVYSTSDCEHGMASVISRLDFNGFYAERLERLSAERSQKAAPQVPVPRGPSAPAPRVAIPAQ.

Tyr-83 bears the Phosphotyrosine mark. The segment at 877–905 (AERSQKAAPQVPVPRGPSAPAPRVAIPAQ) is disordered. A compositionally biased stretch (pro residues) spans 887–896 (VPVPRGPSAP).

The protein belongs to the TUBGCP family. In terms of assembly, component of the gamma-tubulin ring complex (gTuRC) consisting of TUBGCP2, TUBGCP3, TUBGCP4, TUBGCP5 and TUBGCP6 and gamma-tubulin TUBG1 or TUBG2. TUBGCP2, TUBGCP3, TUBGCP4, TUBGCP5 and TUBGCP6 assemble in a 5:5:2:1:1 stoichiometry; each is associated with a gamma-tubulin, thereby arranging 14 gamma-tubulins in a helical manner. Gamma-tubulin at the first position is blocked by TUBGCP3 at the last position, allowing 13 protafilaments to grow into a microtubule. The gTuRC (via TUBGCP3 and TUBGCP6) interacts with ACTB and MZT1; the interactions form a luminal bridge that stabilizes the initial structure during complex assembly. The gTuRC (via TUBGCP2) interacts with MZT2A/MZT2B and CDK5RAP2 (via CM1 motif); the interactions play a role in gTuRC activation. Interacts with ATF5; the ATF5:PCNT:polyglutamylated tubulin (PGT) tripartite unites the mother centriole and the pericentriolar material (PCM) in the centrosome.

Its subcellular location is the cytoplasm. The protein localises to the cytoskeleton. It localises to the microtubule organizing center. The protein resides in the centrosome. Functionally, component of the gamma-tubulin ring complex (gTuRC) which mediates microtubule nucleation. The gTuRC regulates the minus-end nucleation of alpha-beta tubulin heterodimers that grow into microtubule protafilaments, a critical step in centrosome duplication and spindle formation. Plays a role in neuronal migration. This Mus musculus (Mouse) protein is Gamma-tubulin complex component 2 (Tubgcp2).